A 405-amino-acid polypeptide reads, in one-letter code: Cytochrome b (405 aa).

Residues 44–64 form a helical membrane-spanning segment; sequence FGSLAGIAMIIMIATGIFLAM. Residues His-94 and His-108 each coordinate heme b. 8 consecutive transmembrane segments (helical) span residues 97–117, 124–144, 163–183, 191–211, 245–265, 303–323, 338–358, and 368–388; these read GASM…YYGS, VLWW…FMGY, FSAI…GFSV, FFSL…LHMW, FGLG…PNFF, LGGV…PWLD, GFFW…AMPA, and LATI…GWFE. Heme b is bound by residues His-195 and His-209.

Belongs to the cytochrome b family. As to quaternary structure, the main subunits of complex b-c1 are: cytochrome b, cytochrome c1 and the Rieske protein. Requires heme b as cofactor.

The protein resides in the cell membrane. Its function is as follows. Component of the ubiquinol-cytochrome c reductase complex (complex III or cytochrome b-c1 complex), which is a respiratory chain that generates an electrochemical potential coupled to ATP synthesis. This is Cytochrome b (petB) from Rhodospirillum rubrum.